A 441-amino-acid chain; its full sequence is MAVVPASLSGQDVGSFAYLTIKDRIPQILTKVIDTLHRHKSEFFEKHGEEGVEAEKKAISLLSKLRNELQTDKPFIPLVEKFVDTDIWNQYLEYQQSLLNESDGKSRWFYSPWLLVECYMYRRIHEAIIQSPPIDYFDVFKESKEQNFYGSQESIIALCTHLQQLIRTIEDLDENQLKDEFFKLLQISLWGNKCDLSLSGGESSSQNTNVLNSLEDLKPFILLNDMEHLWSLLSNCKKTREKASATRVYIVLDNSGFELVTDLILADFLLSSELATEVHFYGKTIPWFVSDTTIHDFNWLIEQVKHSNHKWMSKCGADWEEYIKMGKWVYHNHIFWTLPHEYCAMPQVAPDLYAELQKAHLILFKGDLNYRKLTGDRKWEFSVPFHQALNGFHPAPLCTIRTLKAEIQVGLQPGQGEQLLASEPSWWTTGKYGIFQYDGPL.

The residue at position 2 (alanine 2) is an N-acetylalanine. Lysine 40 carries the N6-acetyllysine modification. Position 102 is a phosphoserine (serine 102). Mn(2+)-binding residues include aspartate 253 and asparagine 254. 253 to 254 (DN) is a binding site for substrate. Residues glutamate 258 and aspartate 291 each coordinate S-adenosyl-L-methionine. Aspartate 291 contributes to the Mn(2+) binding site. Substrate contacts are provided by residues 367–371 (DLNYR) and lysine 404. Residues 401–404 (RTLK) carry the Subfamily III RTxK motif motif.

It belongs to the damage-control phosphatase family. Sugar phosphate phosphatase III subfamily. The cofactor is Mn(2+). Requires Ni(2+) as cofactor. Automethylated.

It carries out the reaction beta-D-fructose 1-phosphate + H2O = D-fructose + phosphate. The catalysed reaction is beta-D-fructose 6-phosphate = dihydroxyacetone + D-glyceraldehyde 3-phosphate. The enzyme catalyses L-glutamyl-[protein] + S-adenosyl-L-methionine = [protein]-L-glutamate 5-O-methyl ester + S-adenosyl-L-homocysteine. Functionally, metal-dependent phosphatase that shows phosphatase activity against several substrates, including fructose-1-phosphate and fructose-6-phosphate. Its preference for fructose-1-phosphate, a strong glycating agent that causes DNA damage rather than a canonical yeast metabolite, suggests a damage-control function in hexose phosphate metabolism. Has also been shown to have O-methyltransferase activity that methylates glutamate residues of target proteins to form gamma-glutamyl methyl ester residues. Possibly methylates PCNA, suggesting it is involved in the DNA damage response. This chain is Damage-control phosphatase ARMT1, found in Homo sapiens (Human).